Here is a 1093-residue protein sequence, read N- to C-terminus: ATP-dependent helicase/deoxyribonuclease subunit B (1093 aa).

Belongs to the helicase family. AddB/RexB type 2 subfamily. In terms of assembly, heterodimer of AddA and RexB. It depends on Mg(2+) as a cofactor.

Functionally, the heterodimer acts as both an ATP-dependent DNA helicase and an ATP-dependent, dual-direction single-stranded exonuclease. Recognizes the chi site generating a DNA molecule suitable for the initiation of homologous recombination. This subunit has 5' -&gt; 3' nuclease activity but not helicase activity. The polypeptide is ATP-dependent helicase/deoxyribonuclease subunit B (Streptococcus sanguinis (strain SK36)).